The chain runs to 336 residues: Protein DIA1 (336 aa).

Its subcellular location is the cytoplasm. Functionally, involved in regulation of invasive growth. In Saccharomyces cerevisiae (strain ATCC 204508 / S288c) (Baker's yeast), this protein is Protein DIA1 (DIA1).